The chain runs to 280 residues: Golgi to ER traffic protein 2 (280 aa).

The Cytoplasmic segment spans residues 1–149; that stretch reads MPSDREKQRI…IAYNLYQQRK (149 aa). The segment at 15-59 is disordered; the sequence is RQAKMAKGGASDRLNKILSQGSSVKTSAVSVLDQPQPADHDPEGM. Residues 31–43 are compositionally biased toward polar residues; sequence ILSQGSSVKTSAV. Residues 150–170 form a helical membrane-spanning segment; sequence VRHRFLVVRMVSILANFVYHF. Topologically, residues 171-197 are lumenal; the sequence is LTISDFSFSPSANPFIRSIPPTSSVSS. The helical transmembrane segment at 198-217 threads the bilayer; sequence FFQIFVAIEAVLVAAYIAAS. At 218–257 the chain is on the cytoplasmic side; it reads RNVPSNNNGLLVKGISMAAMFVPKLQRFQPLIMKIIGCWD. The helical transmembrane segment at 258–278 threads the bilayer; it reads TVTFVLNDLGLVVLLFGLISF. Residues 279 to 280 lie on the Lumenal side of the membrane; the sequence is RR.

It belongs to the GET2 family. Component of the Golgi to ER traffic (GET) complex, which is composed of GET1, GET2 and GET3. Within the complex, GET1 and GET2 form a heterotetramer which is stabilized by phosphatidylinositol binding and which binds to the GET3 homodimer.

The protein resides in the endoplasmic reticulum membrane. Its subcellular location is the golgi apparatus membrane. Required for the post-translational delivery of tail-anchored (TA) proteins to the endoplasmic reticulum. Together with GET1, acts as a membrane receptor for soluble GET3, which recognizes and selectively binds the transmembrane domain of TA proteins in the cytosol. The GET complex cooperates with the HDEL receptor ERD2 to mediate the ATP-dependent retrieval of resident ER proteins that contain a C-terminal H-D-E-L retention signal from the Golgi to the ER. The sequence is that of Golgi to ER traffic protein 2 from Meyerozyma guilliermondii (strain ATCC 6260 / CBS 566 / DSM 6381 / JCM 1539 / NBRC 10279 / NRRL Y-324) (Yeast).